We begin with the raw amino-acid sequence, 317 residues long: Acetyl-coenzyme A carboxylase carboxyl transferase subunit alpha (317 aa).

The region spanning 40 to 294 (RLQHKSQELT…KQQILADLAE (255 aa)) is the CoA carboxyltransferase C-terminal domain.

It belongs to the AccA family. Acetyl-CoA carboxylase is a heterohexamer composed of biotin carboxyl carrier protein (AccB), biotin carboxylase (AccC) and two subunits each of ACCase subunit alpha (AccA) and ACCase subunit beta (AccD).

The protein resides in the cytoplasm. The enzyme catalyses N(6)-carboxybiotinyl-L-lysyl-[protein] + acetyl-CoA = N(6)-biotinyl-L-lysyl-[protein] + malonyl-CoA. The protein operates within lipid metabolism; malonyl-CoA biosynthesis; malonyl-CoA from acetyl-CoA: step 1/1. Component of the acetyl coenzyme A carboxylase (ACC) complex. First, biotin carboxylase catalyzes the carboxylation of biotin on its carrier protein (BCCP) and then the CO(2) group is transferred by the carboxyltransferase to acetyl-CoA to form malonyl-CoA. The sequence is that of Acetyl-coenzyme A carboxylase carboxyl transferase subunit alpha from Haemophilus ducreyi (strain 35000HP / ATCC 700724).